A 417-amino-acid chain; its full sequence is Probable glucuronosyltransferase Os01g0926700 (417 aa).

The Cytoplasmic segment spans residues 1-3 (MRR). Residues 4 to 24 (WVLAIAILAAAVCFFLGAQAQ) form a helical; Signal-anchor for type II membrane protein membrane-spanning segment. Residues 25–417 (EVRQGHQTER…AGPVGDLKPW (393 aa)) are Lumenal-facing. 2 N-linked (GlcNAc...) asparagine glycosylation sites follow: asparagine 144 and asparagine 405.

This sequence belongs to the glycosyltransferase 47 family.

The protein resides in the golgi apparatus membrane. In terms of biological role, involved in the synthesis of glucuronoxylan hemicellulose in secondary cell walls. The chain is Probable glucuronosyltransferase Os01g0926700 from Oryza sativa subsp. japonica (Rice).